Reading from the N-terminus, the 330-residue chain is DNA-directed RNA polymerase subunit alpha (330 aa).

The alpha N-terminal domain (alpha-NTD) stretch occupies residues 1 to 236; that stretch reads MQGSVTEFLK…EQLDAFVDLR (236 aa). The tract at residues 250 to 330 is alpha C-terminal domain (alpha-CTD); sequence FDPILLRPVD…NWPPASIAED (81 aa).

Belongs to the RNA polymerase alpha chain family. Homodimer. The RNAP catalytic core consists of 2 alpha, 1 beta, 1 beta' and 1 omega subunit. When a sigma factor is associated with the core the holoenzyme is formed, which can initiate transcription.

It carries out the reaction RNA(n) + a ribonucleoside 5'-triphosphate = RNA(n+1) + diphosphate. DNA-dependent RNA polymerase catalyzes the transcription of DNA into RNA using the four ribonucleoside triphosphates as substrates. This Vibrio atlanticus (strain LGP32) (Vibrio splendidus (strain Mel32)) protein is DNA-directed RNA polymerase subunit alpha.